A 681-amino-acid chain; its full sequence is Mating-type protein beta1-1 (681 aa).

Positions 165–227 form a DNA-binding region, homeobox; TALE-type; it reads DKNEPTSPTP…DARRRIGWNE (63 aa). Positions 307 to 318 are enriched in basic and acidic residues; it reads LKNDEARRKREA. Disordered stretches follow at residues 307–341, 353–381, and 394–466; these read LKND…SPAS, AIDS…SPLC, and SPVK…SDPF. A compositionally biased stretch (low complexity) spans 413–430; that stretch reads TSAAPSPQPSLLPKLTPT.

The protein belongs to the TALE/M-ATYP homeobox family. In terms of assembly, may dimerize.

Its subcellular location is the nucleus. In terms of biological role, has a major regulatory role in sexual and asexual development. It may bind DNA itself or it may have a role in preventing DNA-binding of another protein. The protein is Mating-type protein beta1-1 of Coprinopsis cinerea (Inky cap fungus).